A 510-amino-acid polypeptide reads, in one-letter code: Calmodulin-binding receptor-like cytoplasmic kinase 3 (510 aa).

Residues 1-30 (MGGDDLSFTRLVITALFGLLMLLQIKETSA) form the signal peptide. Over residues 166-178 (VSSFEMSPSSEKI) the composition is skewed to polar residues. A disordered region spans residues 166–209 (VSSFEMSPSSEKIPQSPFRAPPSPSRVPQSPSRYAMSPRPSRLG). Phosphothreonine is present on Thr-214. A Protein kinase domain is found at 225 to 499 (FADSHQIGEG…MEAVGKQLWA (275 aa)). Residues 231 to 239 (IGEGGFGVV) and Lys-253 each bind ATP. Residues 240-265 (FKGVLDDGQVVAIKRAKKEHFENLRT) form a caM-binding region. Asp-350 (proton acceptor) is an active-site residue. At Ser-354 the chain carries Phosphoserine. Residues Thr-386 and Thr-391 each carry the phosphothreonine modification. At Tyr-399 the chain carries Phosphotyrosine.

This sequence belongs to the protein kinase superfamily. Ser/Thr protein kinase family. In terms of assembly, interacts with calmodulin (CaM) in a Ca(2+)-dependent manner.

It localises to the cytoplasm. The catalysed reaction is L-seryl-[protein] + ATP = O-phospho-L-seryl-[protein] + ADP + H(+). It catalyses the reaction L-threonyl-[protein] + ATP = O-phospho-L-threonyl-[protein] + ADP + H(+). The polypeptide is Calmodulin-binding receptor-like cytoplasmic kinase 3 (CRCK3) (Arabidopsis thaliana (Mouse-ear cress)).